A 199-amino-acid polypeptide reads, in one-letter code: Small ribosomal subunit protein uS4c (199 aa).

Positions 1–24 (MESDQSKVESDQSKMESDQSKVES) are enriched in basic and acidic residues. Residues 1–35 (MESDQSKVESDQSKMESDQSKVESDQSISQSTSKK) are disordered. Positions 84–146 (MRLDNIIFRL…QKSQELIKRN (63 aa)) constitute an S4 RNA-binding domain.

This sequence belongs to the universal ribosomal protein uS4 family. As to quaternary structure, part of the 30S ribosomal subunit. Contacts protein S5. The interaction surface between S4 and S5 is involved in control of translational fidelity.

The protein resides in the plastid. Its subcellular location is the chloroplast. Its function is as follows. One of the primary rRNA binding proteins, it binds directly to 16S rRNA where it nucleates assembly of the body of the 30S subunit. With S5 and S12 plays an important role in translational accuracy. The protein is Small ribosomal subunit protein uS4c (rps4) of Psilotum nudum (Whisk fern).